A 655-amino-acid polypeptide reads, in one-letter code: THO complex subunit 1 (655 aa).

Disordered regions lie at residues 403–427 (ERPA…LGKG) and 539–574 (PSEE…AVTN). The Nuclear localization signal motif lies at 415–431 (RKRQAPEDFLGKGPDRK). Residues 418–427 (QAPEDFLGKG) are compositionally biased toward basic and acidic residues. The span at 563-574 (DSPSIQSKAVTN) shows a compositional bias: polar residues. The Death domain occupies 573 to 655 (TNSQMDEIAA…NNIADNLSET (83 aa)).

In terms of assembly, component of the THO complex. Expressed in the developing neuromast.

The protein resides in the nucleus. It localises to the nucleoplasm. Its subcellular location is the nucleus matrix. The protein localises to the cytoplasm. It is found in the cytosol. In terms of biological role, component of the THO subcomplex of the TREX complex which is thought to couple mRNA transcription, processing and nuclear export, and which specifically associates with spliced mRNA and not with unspliced pre-mRNA. Required for efficient export of polyadenylated RNA. The THOC1-THOC2-THOC3 core complex alone is sufficient to bind export factor NXF1-NXT1 and promote ATPase activity of DDX39B. TREX is recruited to spliced mRNAs by a transcription-independent mechanism, binds to mRNA upstream of the exon-junction complex (EJC) and is recruited in a splicing- and cap-dependent manner to a region near the 5' end of the mRNA where it functions in mRNA export to the cytoplasm via the TAP/NXF1 pathway. Regulates transcriptional elongation of a subset of genes. Involved in genome stability by preventing co-transcriptional R-loop formation. May play a role in hair cell formation, hence may be involved in hearing. Participates in an apoptotic pathway which is characterized by activation of caspase-6, increases in the expression of BAK1 and BCL2L1 and activation of NF-kappa-B. This pathway does not require p53/TP53, nor does the presence of p53/TP53 affect the efficiency of cell killing. Activates a G2/M cell cycle checkpoint prior to the onset of apoptosis. Apoptosis is inhibited by association with RB1. Essential for early embryonic development. Required for normal gene expression during postnatal testis development. The chain is THO complex subunit 1 (thoc1) from Danio rerio (Zebrafish).